A 425-amino-acid polypeptide reads, in one-letter code: Kynureninase (425 aa).

Residues L105, T106, 133–136 (FPSD), D218, H221, and Y243 contribute to the pyridoxal 5'-phosphate site. Residue K244 is modified to N6-(pyridoxal phosphate)lysine. Pyridoxal 5'-phosphate-binding residues include W274 and N302.

Belongs to the kynureninase family. Homodimer. It depends on pyridoxal 5'-phosphate as a cofactor.

The catalysed reaction is L-kynurenine + H2O = anthranilate + L-alanine + H(+). It carries out the reaction 3-hydroxy-L-kynurenine + H2O = 3-hydroxyanthranilate + L-alanine + H(+). The protein operates within amino-acid degradation; L-kynurenine degradation; L-alanine and anthranilate from L-kynurenine: step 1/1. It functions in the pathway cofactor biosynthesis; NAD(+) biosynthesis; quinolinate from L-kynurenine: step 2/3. Its function is as follows. Catalyzes the cleavage of L-kynurenine (L-Kyn) and L-3-hydroxykynurenine (L-3OHKyn) into anthranilic acid (AA) and 3-hydroxyanthranilic acid (3-OHAA), respectively. In Flavobacterium johnsoniae (strain ATCC 17061 / DSM 2064 / JCM 8514 / BCRC 14874 / CCUG 350202 / NBRC 14942 / NCIMB 11054 / UW101) (Cytophaga johnsonae), this protein is Kynureninase.